Consider the following 905-residue polypeptide: Autophagy-related protein 9 (905 aa).

Residues 1–227 (MSEYNQNSNN…NGMLNIVLTR (227 aa)) are Cytoplasmic-facing. Residues 55–132 (REEGNENTNN…TSIPKDPPKK (78 aa)) form a disordered region. Positions 60-84 (ENTNNDNTNLLDSESDSDSSSSLSS) are enriched in low complexity. Residues 94–117 (GKEHNQNEDSTKVHWDTTRPHYGQ) show a composition bias toward basic and acidic residues. The helical transmembrane segment at 228 to 248 (LVDLLILAFILSFTVFLKWGI) threads the bilayer. The Lumenal portion of the chain corresponds to 249 to 272 (NYDFFMSSSSDRASVTLKDLVIPN). A helical transmembrane segment spans residues 273–293 (FISEMVPVSVKLLLLGFSGYI). At 294–463 (VLRLVQLYFD…KELSARFKMA (170 aa)) the chain is on the cytoplasmic side. Residues 464 to 484 (AIINLLLCPFIVIYFVLLYFF) lie within the membrane without spanning it. The Cytoplasmic segment spans residues 485–549 (RYFNEYKSNP…PRGFWVINLM (65 aa)). Residues 550–570 (NFVNFVSGAITAILVLMGLWF) form a helical membrane-spanning segment. The Lumenal segment spans residues 571–588 (DNEEHNFWSFEITENKSS). A helical transmembrane segment spans residues 589-609 (LFYISLFGTVWAITSSSLTST). Residues 610-665 (NSNTSENLNSQTSSFFYDPEASLRYVSQFTHYLPSSWNGRLHTVQVKNEFCELFSM) lie on the Cytoplasmic side of the membrane. An intramembrane segment occupies 666 to 686 (KIIIIINEILSLILTPFILWF). The Cytoplasmic portion of the chain corresponds to 687-905 (KVSNSSGAII…NQFYKHDRNR (219 aa)). Disordered stretches follow at residues 731-795 (LNKS…DINN) and 821-851 (QASKLTSNEQLSTKPSRIAKPDNSQSVVGDP). Residues 733 to 755 (KSKKRKPRKSRANAKKKASSKSK) are compositionally biased toward basic residues. The span at 823 to 835 (SKLTSNEQLSTKP) shows a compositional bias: polar residues.

This sequence belongs to the ATG9 family. As to quaternary structure, homotrimer; forms a homotrimer with a central pore that forms a path between the two membrane leaflets. In terms of processing, phosphorylated by ATG1. ATG1 phosphorylation is required for preautophagosome elongation.

The protein resides in the preautophagosomal structure membrane. The protein localises to the cytoplasmic vesicle membrane. It is found in the golgi apparatus membrane. Its subcellular location is the endoplasmic reticulum membrane. It carries out the reaction a 1,2-diacyl-sn-glycero-3-phosphocholine(in) = a 1,2-diacyl-sn-glycero-3-phosphocholine(out). It catalyses the reaction a 1,2-diacyl-sn-glycero-3-phospho-L-serine(in) = a 1,2-diacyl-sn-glycero-3-phospho-L-serine(out). The enzyme catalyses a 1,2-diacyl-sn-glycero-3-phosphoethanolamine(in) = a 1,2-diacyl-sn-glycero-3-phosphoethanolamine(out). The catalysed reaction is a 1,2-diacyl-sn-glycero-3-phospho-(1D-myo-inositol-3-phosphate)(in) = a 1,2-diacyl-sn-glycero-3-phospho-(1D-myo-inositol-3-phosphate)(out). Functionally, phospholipid scramblase involved in autophagy and cytoplasm to vacuole transport (Cvt) vesicle formation. Cycles between the preautophagosomal structure/phagophore assembly site (PAS) and the cytoplasmic vesicle pool and supplies membrane for the growing autophagosome. Lipid scramblase activity plays a key role in preautophagosomal structure/phagophore assembly by distributing the phospholipids that arrive through ATG2 from the cytoplasmic to the luminal leaflet of the bilayer, thereby driving autophagosomal membrane expansion. Required for mitophagy. Also involved in endoplasmic reticulum-specific autophagic process and is essential for the survival of cells subjected to severe ER stress. Different machineries are required for anterograde trafficking to the PAS during either the Cvt pathway or bulk autophagy and for retrograde trafficking. The polypeptide is Autophagy-related protein 9 (ATG9) (Debaryomyces hansenii (strain ATCC 36239 / CBS 767 / BCRC 21394 / JCM 1990 / NBRC 0083 / IGC 2968) (Yeast)).